A 254-amino-acid polypeptide reads, in one-letter code: Ribosomal protein L11 methyltransferase (254 aa).

S-adenosyl-L-methionine-binding residues include T107, G128, D149, S175, and N191.

Belongs to the methyltransferase superfamily. PrmA family.

It is found in the cytoplasm. The enzyme catalyses L-lysyl-[protein] + 3 S-adenosyl-L-methionine = N(6),N(6),N(6)-trimethyl-L-lysyl-[protein] + 3 S-adenosyl-L-homocysteine + 3 H(+). It catalyses the reaction an N-terminal L-alpha-aminoacyl-[protein] + 3 S-adenosyl-L-methionine = an N-terminal trimethyl-L-alpha-aminoacyl-[protein] + 3 S-adenosyl-L-homocysteine + 3 H(+). In terms of biological role, methylates ribosomal protein L11. Preferentially recognizes free L11 before its incorporation into 50S subunits. This function is dispensable for growth and thermostability. This chain is Ribosomal protein L11 methyltransferase, found in Thermus thermophilus (strain ATCC 27634 / DSM 579 / HB8).